The following is a 57-amino-acid chain: UPF0434 protein swp_2279 (57 aa).

The protein belongs to the UPF0434 family.

The chain is UPF0434 protein swp_2279 from Shewanella piezotolerans (strain WP3 / JCM 13877).